The following is a 181-amino-acid chain: Protein csk22 (181 aa).

The next 5 membrane-spanning stretches (helical) occupy residues 5–22, 35–57, 61–78, 91–113, and 140–162; these read LQSV…YKKI, WLFT…SAIH, YGYL…VFFA, IYFR…RFLY, and LTIG…IIKL.

It localises to the cell membrane. The chain is Protein csk22 (csk22) from Bacillus subtilis (strain 168).